Consider the following 791-residue polypeptide: Phenylalanine--tRNA ligase beta subunit (791 aa).

One can recognise a tRNA-binding domain in the interval 39–147 (GDALGQVVVA…DDAPVGQALA (109 aa)). The B5 domain occupies 400 to 475 (PQPASILLRR…RIHGYDRVPT (76 aa)). D453, D459, E462, and E463 together coordinate Mg(2+). An FDX-ACB domain is found at 697-790 (SRYPSMRRDL…IEREHRARIR (94 aa)).

It belongs to the phenylalanyl-tRNA synthetase beta subunit family. Type 1 subfamily. Tetramer of two alpha and two beta subunits. Mg(2+) is required as a cofactor.

Its subcellular location is the cytoplasm. The enzyme catalyses tRNA(Phe) + L-phenylalanine + ATP = L-phenylalanyl-tRNA(Phe) + AMP + diphosphate + H(+). In Xanthomonas campestris pv. campestris (strain 8004), this protein is Phenylalanine--tRNA ligase beta subunit.